A 419-amino-acid chain; its full sequence is L-rhamnose isomerase (419 aa).

Mn(2+) is bound by residues H262, D294, and D296.

Belongs to the rhamnose isomerase family. As to quaternary structure, homotetramer. It depends on Mn(2+) as a cofactor.

It is found in the cytoplasm. It carries out the reaction L-rhamnopyranose = L-rhamnulose. Its pathway is carbohydrate degradation; L-rhamnose degradation; glycerone phosphate from L-rhamnose: step 1/3. Functionally, catalyzes the interconversion of L-rhamnose and L-rhamnulose. This chain is L-rhamnose isomerase, found in Escherichia coli O81 (strain ED1a).